A 646-amino-acid polypeptide reads, in one-letter code: Anoctamin-10 (646 aa).

8 helical membrane-spanning segments follow: residues 210-230, 241-261, 314-334, 357-377, 404-424, 502-522, 557-577, and 592-612; these read LYFGFLEYFTFALIPMALIGI, DKYVLFAVFNLVWSTVFLEVW, IYLVSVPFVLLCLYLSFYVMM, VLLFVPSIIYAVVIEIMNLLY, VLVFNFVNCFASLFYIAFVMQ, FLLFGYVSLFSCVHPLAAVLV, LAFETMSIIAVVTNCALIALS, and ILTVVAIEHVLLAFKFILAFV.

This sequence belongs to the anoctamin family.

It localises to the membrane. In terms of biological role, does not exhibit calcium-activated chloride channel (CaCC) activity. Can inhibit the activity of ANO1. The sequence is that of Anoctamin-10 (ano10) from Danio rerio (Zebrafish).